A 250-amino-acid chain; its full sequence is Manganese transport system ATP-binding protein MntB (250 aa).

Positions 5–236 (VKVDNLSVFY…MVAKTYQGNL (232 aa)) constitute an ABC transporter domain. 37 to 44 (GPNGAGKS) contacts ATP.

Belongs to the ABC transporter superfamily.

It is found in the cell membrane. Functionally, this protein is probably a component of a manganese permease, a binding protein-dependent, ATP-driven transport system. Probably responsible for energy coupling to the transport system. The chain is Manganese transport system ATP-binding protein MntB (mntB) from Halalkalibacterium halodurans (strain ATCC BAA-125 / DSM 18197 / FERM 7344 / JCM 9153 / C-125) (Bacillus halodurans).